A 447-amino-acid chain; its full sequence is Glycylpeptide N-tetradecanoyltransferase (447 aa).

Tetradecanoyl-CoA contacts are provided by residues 38–41, 171–173, and 179–183; these read YKFW, LCV, and SKRLA. Leu447 (proton acceptor; via carboxylate) is an active-site residue.

It belongs to the NMT family. As to quaternary structure, monomer.

The protein localises to the cytoplasm. It carries out the reaction N-terminal glycyl-[protein] + tetradecanoyl-CoA = N-tetradecanoylglycyl-[protein] + CoA + H(+). Adds a myristoyl group to the N-terminal glycine residue of certain cellular proteins. This chain is Glycylpeptide N-tetradecanoyltransferase (NMT1), found in Kluyveromyces lactis (strain ATCC 8585 / CBS 2359 / DSM 70799 / NBRC 1267 / NRRL Y-1140 / WM37) (Yeast).